We begin with the raw amino-acid sequence, 431 residues long: Adenylosuccinate synthetase (431 aa).

Residues 12–18 (GDEGKGK) and 40–42 (GHT) each bind GTP. Asp13 functions as the Proton acceptor in the catalytic mechanism. 2 residues coordinate Mg(2+): Asp13 and Gly40. IMP-binding positions include 13-16 (DEGK), 38-41 (NAGH), Thr130, Arg144, Gln225, Thr240, and Arg304. Catalysis depends on His41, which acts as the Proton donor. A substrate-binding site is contributed by 300–306 (ATTGRPR). GTP contacts are provided by residues Arg306, 332-334 (KLD), and 414-416 (SVG).

It belongs to the adenylosuccinate synthetase family. As to quaternary structure, homodimer. It depends on Mg(2+) as a cofactor.

The protein localises to the cytoplasm. The enzyme catalyses IMP + L-aspartate + GTP = N(6)-(1,2-dicarboxyethyl)-AMP + GDP + phosphate + 2 H(+). It functions in the pathway purine metabolism; AMP biosynthesis via de novo pathway; AMP from IMP: step 1/2. Plays an important role in the de novo pathway of purine nucleotide biosynthesis. Catalyzes the first committed step in the biosynthesis of AMP from IMP. In Anaeromyxobacter sp. (strain Fw109-5), this protein is Adenylosuccinate synthetase.